The primary structure comprises 160 residues: Transcription elongation factor GreA (160 aa).

Residues 2 to 30 (SEKTYPMTLAEKEQLEQELEELKLVRRPE) are a coiled coil.

Belongs to the GreA/GreB family.

Necessary for efficient RNA polymerase transcription elongation past template-encoded arresting sites. The arresting sites in DNA have the property of trapping a certain fraction of elongating RNA polymerases that pass through, resulting in locked ternary complexes. Cleavage of the nascent transcript by cleavage factors such as GreA or GreB allows the resumption of elongation from the new 3'terminus. GreA releases sequences of 2 to 3 nucleotides. The protein is Transcription elongation factor GreA of Streptococcus mutans serotype c (strain ATCC 700610 / UA159).